The following is a 315-amino-acid chain: Methionyl-tRNA formyltransferase (315 aa).

(6S)-5,6,7,8-tetrahydrofolate is bound at residue 113–116 (SLLP).

Belongs to the Fmt family.

The catalysed reaction is L-methionyl-tRNA(fMet) + (6R)-10-formyltetrahydrofolate = N-formyl-L-methionyl-tRNA(fMet) + (6S)-5,6,7,8-tetrahydrofolate + H(+). Functionally, attaches a formyl group to the free amino group of methionyl-tRNA(fMet). The formyl group appears to play a dual role in the initiator identity of N-formylmethionyl-tRNA by promoting its recognition by IF2 and preventing the misappropriation of this tRNA by the elongation apparatus. The sequence is that of Methionyl-tRNA formyltransferase from Photorhabdus laumondii subsp. laumondii (strain DSM 15139 / CIP 105565 / TT01) (Photorhabdus luminescens subsp. laumondii).